A 249-amino-acid chain; its full sequence is Homeobox protein TGIF2LX (249 aa).

Disordered stretches follow at residues 1–62 (MEAA…KRKG) and 126–192 (DPIV…KLTV). The segment covering 9 to 27 (AETRSRVEKDSRRAKKDSP) has biased composition (basic and acidic residues). The span at 28–46 (AKTQSPAQDTSIMLRNNAD) shows a compositional bias: polar residues. Positions 55–118 (EHKKKRKGYL…INARRRILPD (64 aa)) form a DNA-binding region, homeobox; TALE-type. Polar residues predominate over residues 159–172 (DNVQSLPLRSSPKG).

It belongs to the TALE/TGIF homeobox family.

It localises to the nucleus. Functionally, may have a transcription role in testis. In Macaca fascicularis (Crab-eating macaque), this protein is Homeobox protein TGIF2LX (TGIF2LX).